A 211-amino-acid polypeptide reads, in one-letter code: Probable GTP-binding protein EngB (211 aa).

An EngB-type G domain is found at 13 to 188; that stretch reads SGYEIAFAGR…ASVMAGRLHF (176 aa). GTP is bound by residues 21-28, 48-52, 67-70, 134-137, and 167-169; these read GRSNAGKS, GRTQM, DLPG, TKAD, and FSS. Residues Ser-28 and Thr-50 each contribute to the Mg(2+) site.

It belongs to the TRAFAC class TrmE-Era-EngA-EngB-Septin-like GTPase superfamily. EngB GTPase family. Mg(2+) serves as cofactor.

In terms of biological role, necessary for normal cell division and for the maintenance of normal septation. In Acinetobacter baumannii (strain ATCC 17978 / DSM 105126 / CIP 53.77 / LMG 1025 / NCDC KC755 / 5377), this protein is Probable GTP-binding protein EngB.